A 417-amino-acid polypeptide reads, in one-letter code: Putative competence-damage inducible protein (417 aa).

It belongs to the CinA family.

In Shouchella clausii (strain KSM-K16) (Alkalihalobacillus clausii), this protein is Putative competence-damage inducible protein.